The primary structure comprises 83 residues: Omega-agatoxin-Aa4b (83 aa).

Residues 1-20 (MKLCMTLLITAIAVVTFVVA) form the signal peptide. A propeptide spanning residues 21 to 35 (TQEESAEFNEVEESR) is cleaved from the precursor. 4 disulfide bridges follow: C39–C55, C47–C60, C54–C71, and C62–C69. S81 is subject to D-serine (Ser).

Belongs to the neurotoxin 02 (plectoxin) family. 03 (omega-agtx) subfamily. The toxin with D-Ser (named omega-aga IVC) is 80-90 fold more potent than that with L-Ser (omega-aga IVB) against Cav2.1/CACNA1A (P-type) channels in rat cerebellar Purkinje neurons and is more resistant to proteases. The epimerization is done by the venom peptide isomerase heterodimer. Expressed by the venom gland.

It is found in the secreted. In terms of biological role, antagonist of voltage-gated Cav2.1/CACNA1A (P-type) calcium channels. Paralyzes insect by blocking neuromuscular transmission. The chain is Omega-agatoxin-Aa4b from Agelenopsis aperta (North American funnel-web spider).